The sequence spans 311 residues: MRNSLYKKNIISISDLNQNELELVLKKSAFLKVKAQPNLLKNKIIASCFFEASTRTRLSFETAVHRLGASIIGFSDGSNISLGKKGETLSDTISVISSYVDAIIIRHPQEGSARLAAQFSNGVPIFNAGDGANQHPTQTLLDLFTIKETQNKLNNLNIAMVGDLKYGRTVHSLTQALAKYKNNQFFFVSPDSLTMPNYINDMLYKKEIHWKRYKNIEEIISEIDILYMTRVQKERLDSTEYASAKSKFVLQTSTLKNARNNLKILHPLPRIDEIDNNVDFTPYAWYFKQAANGIYARQAILSLVLIEKHFE.

Residues arginine 55 and threonine 56 each coordinate carbamoyl phosphate. Lysine 85 contributes to the L-aspartate binding site. Arginine 106, histidine 135, and glutamine 138 together coordinate carbamoyl phosphate. Positions 168 and 230 each coordinate L-aspartate. Residues leucine 268 and proline 269 each contribute to the carbamoyl phosphate site.

This sequence belongs to the aspartate/ornithine carbamoyltransferase superfamily. ATCase family. Heterododecamer (2C3:3R2) of six catalytic PyrB chains organized as two trimers (C3), and six regulatory PyrI chains organized as three dimers (R2).

It catalyses the reaction carbamoyl phosphate + L-aspartate = N-carbamoyl-L-aspartate + phosphate + H(+). Its pathway is pyrimidine metabolism; UMP biosynthesis via de novo pathway; (S)-dihydroorotate from bicarbonate: step 2/3. In terms of biological role, catalyzes the condensation of carbamoyl phosphate and aspartate to form carbamoyl aspartate and inorganic phosphate, the committed step in the de novo pyrimidine nucleotide biosynthesis pathway. This Buchnera aphidicola subsp. Schizaphis graminum (strain Sg) protein is Aspartate carbamoyltransferase catalytic subunit.